Consider the following 200-residue polypeptide: Holliday junction branch migration complex subunit RuvA (200 aa).

Positions 1–64 (MYAYFRGELI…EDLMQLYGFI (64 aa)) are domain I. The segment at 65–143 (EEEERQLFLL…KLQQTRPGKT (79 aa)) is domain II. The interval 144-154 (AGAGSVASLSE) is flexible linker. A domain III region spans residues 154–200 (EDALQALMTLGFSRASAQQAVTRALLSAENPGVEDIVREALQNIRNH).

This sequence belongs to the RuvA family. As to quaternary structure, homotetramer. Forms an RuvA(8)-RuvB(12)-Holliday junction (HJ) complex. HJ DNA is sandwiched between 2 RuvA tetramers; dsDNA enters through RuvA and exits via RuvB. An RuvB hexamer assembles on each DNA strand where it exits the tetramer. Each RuvB hexamer is contacted by two RuvA subunits (via domain III) on 2 adjacent RuvB subunits; this complex drives branch migration. In the full resolvosome a probable DNA-RuvA(4)-RuvB(12)-RuvC(2) complex forms which resolves the HJ.

The protein localises to the cytoplasm. Functionally, the RuvA-RuvB-RuvC complex processes Holliday junction (HJ) DNA during genetic recombination and DNA repair, while the RuvA-RuvB complex plays an important role in the rescue of blocked DNA replication forks via replication fork reversal (RFR). RuvA specifically binds to HJ cruciform DNA, conferring on it an open structure. The RuvB hexamer acts as an ATP-dependent pump, pulling dsDNA into and through the RuvAB complex. HJ branch migration allows RuvC to scan DNA until it finds its consensus sequence, where it cleaves and resolves the cruciform DNA. The polypeptide is Holliday junction branch migration complex subunit RuvA (Prosthecochloris aestuarii (strain DSM 271 / SK 413)).